Consider the following 445-residue polypeptide: C-terminal-binding protein 2 (445 aa).

An Asymmetric dimethylarginine modification is found at Arg22. Residues Ser106, Ile186 to Thr191, Asp210, Cys243 to Asn249, Ala270 to Arg272, and Asp296 each bind NAD(+). The active site involves Arg272. Glu301 is a catalytic residue. His321 functions as the Proton donor in the catalytic mechanism. His321–Trp324 contacts NAD(+). The interval Thr414 to Gln445 is disordered. At Ser428 the chain carries Phosphoserine. Residues Lys434–Gln445 show a composition bias toward basic and acidic residues.

This sequence belongs to the D-isomer specific 2-hydroxyacid dehydrogenase family. In terms of assembly, can form homodimers or heterodimers of CTBP1 and CTBP2. Interacts with HIPK2 and ZNF217. Interacts with PRDM16; represses white adipose tissue (WAT)-specific genes expression. Interacts with PNN, NRIP1 and WIZ. Interacts with MCRIP1. (Microbial infection) Interacts with human adenovirus 5 E1A protein; this interaction seems to potentiate viral replication. Ubiquitous. Highest levels in heart, skeletal muscle, and pancreas.

The protein resides in the nucleus. The protein localises to the synapse. Its function is as follows. Corepressor targeting diverse transcription regulators. Functions in brown adipose tissue (BAT) differentiation. Isoform 2 probably acts as a scaffold for specialized synapses. In Homo sapiens (Human), this protein is C-terminal-binding protein 2 (CTBP2).